Here is a 122-residue protein sequence, read N- to C-terminus: UPF0102 protein RHECIAT_CH0000358 (122 aa).

This sequence belongs to the UPF0102 family.

This chain is UPF0102 protein RHECIAT_CH0000358, found in Rhizobium etli (strain CIAT 652).